The chain runs to 188 residues: MAERGSDIRPGQILDHNGSLYLVVKTMHTQPGKGGAYIQAELKNLKTGAKYQERFRSDGYVKRAIVEEVEYQYIFGDGASLTLMNTATYEQVSISADMLGEKGVYLKEGIILTLSFYQGQVVAARVPDYVVLEVVETESVIKGQTASSSYKSAVLENGERISVPPFIKVGERIVVYTVDDTYYERAKD.

This sequence belongs to the elongation factor P family.

It localises to the cytoplasm. Its pathway is protein biosynthesis; polypeptide chain elongation. Its function is as follows. Involved in peptide bond synthesis. Stimulates efficient translation and peptide-bond synthesis on native or reconstituted 70S ribosomes in vitro. Probably functions indirectly by altering the affinity of the ribosome for aminoacyl-tRNA, thus increasing their reactivity as acceptors for peptidyl transferase. In Anaplasma marginale (strain St. Maries), this protein is Elongation factor P.